A 481-amino-acid polypeptide reads, in one-letter code: Glutamate--tRNA ligase (481 aa).

The 'HIGH' region signature appears at 11–21 (PSPTGLLHIGN). The 'KMSKS' region motif lies at 255-259 (KLSKR). An ATP-binding site is contributed by Lys-258.

The protein belongs to the class-I aminoacyl-tRNA synthetase family. Glutamate--tRNA ligase type 1 subfamily. Monomer.

It localises to the cytoplasm. It carries out the reaction tRNA(Glu) + L-glutamate + ATP = L-glutamyl-tRNA(Glu) + AMP + diphosphate. Functionally, catalyzes the attachment of glutamate to tRNA(Glu) in a two-step reaction: glutamate is first activated by ATP to form Glu-AMP and then transferred to the acceptor end of tRNA(Glu). In Streptococcus pyogenes serotype M4 (strain MGAS10750), this protein is Glutamate--tRNA ligase.